The chain runs to 447 residues: ATP-dependent protease ATPase subunit HslU (447 aa).

ATP contacts are provided by residues isoleucine 17, 59 to 64, aspartate 256, glutamate 321, and arginine 393; that span reads GVGKTE.

Belongs to the ClpX chaperone family. HslU subfamily. As to quaternary structure, a double ring-shaped homohexamer of HslV is capped on each side by a ring-shaped HslU homohexamer. The assembly of the HslU/HslV complex is dependent on binding of ATP.

The protein localises to the cytoplasm. In terms of biological role, ATPase subunit of a proteasome-like degradation complex; this subunit has chaperone activity. The binding of ATP and its subsequent hydrolysis by HslU are essential for unfolding of protein substrates subsequently hydrolyzed by HslV. HslU recognizes the N-terminal part of its protein substrates and unfolds these before they are guided to HslV for hydrolysis. The sequence is that of ATP-dependent protease ATPase subunit HslU from Stutzerimonas stutzeri (strain A1501) (Pseudomonas stutzeri).